We begin with the raw amino-acid sequence, 470 residues long: Aldehyde dehydrogenase family 3 comG (470 aa).

196–201 (GSVKVG) contacts NAD(+). Active-site residues include Glu218 and Cys252.

This sequence belongs to the aldehyde dehydrogenase family.

It is found in the cytoplasm. The catalysed reaction is an aldehyde + NADP(+) + H2O = a carboxylate + NADPH + 2 H(+). It catalyses the reaction an aldehyde + NAD(+) + H2O = a carboxylate + NADH + 2 H(+). The chain is Aldehyde dehydrogenase family 3 comG (comG) from Dictyostelium discoideum (Social amoeba).